Reading from the N-terminus, the 194-residue chain is Calcium channel flower (194 aa).

Helical transmembrane passes span 35-55 (LGIVAAFFAILFGLWNVFSII), 66-88 (IIQMVAGFVVMLLEALCCFVCFE), and 107-127 (GLYIAMAIPPIILCFGLASLF).

Belongs to the calcium channel flower family. As to quaternary structure, homomultimer. Associates with the dally/ magu complex.

The protein resides in the cell membrane. It localises to the cytoplasmic vesicle. The protein localises to the secretory vesicle. Its subcellular location is the synaptic vesicle membrane. It is found in the presynaptic cell membrane. The protein resides in the endosome. Its activity is regulated as follows. Channel activity is inhibited by La(3+), which reduces Ca(2+) influx and thus inhibits it's function in promoting activity-dependent bulk endocytosis (ADBE) in response to high stimuli. Functionally, transmembrane protein which mediates synaptic endocytosis, fitness-based cell culling, neuronal culling, morphogen gradient scaling, and calcium transport. Regulates synaptic endocytosis and hence couples exo- with endocytosis. Controls two major modes of synaptic vesicle (SV) endocytosis in the synaptic boutons of neuromuscular junctions (NMJs); Ca(2+) channel-independent Clathrin-mediated endocytosis (CME) in response to mild stimulation, and Ca(2+) channel-dependent activity-dependent bulk endocytosis (ADBE) in response to strong stimulation. Functions in ADBE and subsequent SV reformation from bulk endosomes by initiating Ca(2+) channel-dependent phosphatidylinositol 4,5-bisphosphate (PtdIns(4,5)P2) compartmentalization in synaptic boutons. There it acts at the periactive zone to provide the low Ca(2+) levels required to initiate Calcineurin activation and upregulate PtdIns(4,5)P2. Conversely PtdIns(4,5)P2 enhances fwe Ca(2+) channel-activity, establishing a positive feedback loop that induces PtdIns(4,5)P2 microdomain at the periactive zone. These microdomains trigger bulk membrane invagination (i.e. ADBE) by triggering actin polymerization while also promoting localization of fwe to bulk endosomes, thereby removing the ADBE trigger to reduce endocytosis and prevent excess membrane uptake. PtdIns(4,5)P2 then promotes SV reformation from the bulk endosomes, to coordinate ADBE and subsequent SV reformation. Different combinations of the flower isoforms at the cell membrane are also required for the identification and elimination of suboptimal or supernumerary cells during development, regeneration, and adulthood. Required for the recognition and elimination of unfit cells in the developing wing during cell competition. In the developing pupal retina, mediates the elimination of unwanted postmitotic neurons, including supernumerary photoreceptor neurons that form at the periphery of the retina and are contained within incomplete ommatidia units. Also required for efficient elimination and replacement of old neurons by newly generated neurons during regeneration in the adult brain following mechanical injury. Downstream of the flower fitness fingerprints, cells identified as unwanted or unfit are eliminated via apoptosis through the expression of ahuizotl (azot). However, the cells marked for elimination by the flower isoforms only undergo apoptosis if additional thresholds are met; (1) their neighboring fit/healthy cells express different levels of the fwe isoforms, and (2) the levels of the protective signal SPARC expressed by the loser or unwanted cells are unable to inhibit caspase activation. These additional thresholds for flower-mediated apoptosis, allows useful cells to recover from transient and limited stress before they are unnecessarily eliminated. Functions with dally and magu in a mechanism of scaling, which utilises apoptosis to ensure that the dpp morphogen gradient, which mediates organ growth, remains proportional to the size of the growing wing. In this mechanism, fwe represses dally- and Magu-dependent activity in expanding the gradient, and dally/Magu inhibits fwe-dependent apoptosis to keep cell death rate low. When the levels of these different proteins are optimally regulated the gradient correctly scales with organ growth but when this fails, fwe-mediated apoptosis is activated to trim the developing tissue to match the correct size of the gradient. The chain is Calcium channel flower from Drosophila sechellia (Fruit fly).